Reading from the N-terminus, the 125-residue chain is Large ribosomal subunit protein mL51 (125 aa).

The N-terminal 29 residues, 1-29 (MWSVQQLLWGCRSLLTQGCRSFSLGSRDL), are a transit peptide targeting the mitochondrion.

Belongs to the mitochondrion-specific ribosomal protein mL51 family. As to quaternary structure, component of the mitochondrial ribosome large subunit (39S) which comprises a 16S rRNA and about 50 distinct proteins.

Its subcellular location is the mitochondrion. This chain is Large ribosomal subunit protein mL51 (mrpl51), found in Xenopus tropicalis (Western clawed frog).